Consider the following 61-residue polypeptide: Large ribosomal subunit protein uL30 (61 aa).

This sequence belongs to the universal ribosomal protein uL30 family. In terms of assembly, part of the 50S ribosomal subunit.

This Jannaschia sp. (strain CCS1) protein is Large ribosomal subunit protein uL30.